A 346-amino-acid polypeptide reads, in one-letter code: Biotin synthase (346 aa).

The 219-residue stretch at 38–256 (RQVQVSTLLS…IAVARIMMPT (219 aa)) folds into the Radical SAM core domain. [4Fe-4S] cluster contacts are provided by cysteine 53, cysteine 57, and cysteine 60. [2Fe-2S] cluster contacts are provided by cysteine 97, cysteine 128, cysteine 188, and arginine 260.

Belongs to the radical SAM superfamily. Biotin synthase family. As to quaternary structure, homodimer. The cofactor is [4Fe-4S] cluster. [2Fe-2S] cluster serves as cofactor.

The catalysed reaction is (4R,5S)-dethiobiotin + (sulfur carrier)-SH + 2 reduced [2Fe-2S]-[ferredoxin] + 2 S-adenosyl-L-methionine = (sulfur carrier)-H + biotin + 2 5'-deoxyadenosine + 2 L-methionine + 2 oxidized [2Fe-2S]-[ferredoxin]. It participates in cofactor biosynthesis; biotin biosynthesis; biotin from 7,8-diaminononanoate: step 2/2. Functionally, catalyzes the conversion of dethiobiotin (DTB) to biotin by the insertion of a sulfur atom into dethiobiotin via a radical-based mechanism. This is Biotin synthase from Shigella flexneri serotype 5b (strain 8401).